Here is a 298-residue protein sequence, read N- to C-terminus: Inosose dehydratase (298 aa).

Belongs to the IolE/MocC family. Glutathione is required as a cofactor. Requires Co(2+) as cofactor. Mn(2+) serves as cofactor.

It carries out the reaction scyllo-inosose = 3D-3,5/4-trihydroxycyclohexane-1,2-dione + H2O. Its pathway is polyol metabolism; myo-inositol degradation into acetyl-CoA; acetyl-CoA from myo-inositol: step 2/7. Catalyzes the dehydration of inosose (2-keto-myo-inositol, 2KMI or 2,4,6/3,5-pentahydroxycyclohexanone) to 3D-(3,5/4)-trihydroxycyclohexane-1,2-dione (D-2,3-diketo-4-deoxy-epi-inositol). In Bacillus velezensis (strain DSM 23117 / BGSC 10A6 / LMG 26770 / FZB42) (Bacillus amyloliquefaciens subsp. plantarum), this protein is Inosose dehydratase.